A 787-amino-acid polypeptide reads, in one-letter code: LPS-assembly protein LptD (787 aa).

Positions 1-78 are disordered; sequence MAAGLPPLVV…AAGAAPAESG (78 aa). Residues 59-78 show a composition bias toward low complexity; that stretch reads LPPVGTPAEPAAGAAPAESG.

Belongs to the LptD family. In terms of assembly, component of the lipopolysaccharide transport and assembly complex. Interacts with LptE and LptA.

Functionally, together with LptE, is involved in the assembly of lipopolysaccharide (LPS) at the surface of the outer membrane. The protein is LPS-assembly protein LptD of Aromatoleum aromaticum (strain DSM 19018 / LMG 30748 / EbN1) (Azoarcus sp. (strain EbN1)).